Consider the following 207-residue polypeptide: Coiled-coil domain-containing protein 25 (207 aa).

Over 1–104 (MVFYFTSAVV…SNLKKTADMD (104 aa)) the chain is Extracellular. Residues 20 to 24 (KDKYE) form a DNA-binding region. The helical transmembrane segment at 105-121 (IGQIGFHRQKEVKIVAV) threads the bilayer. Residues 112–189 (RQKEVKIVAV…EDLKNYTSLM (78 aa)) are a coiled coil. At 122 to 207 (EKKINEIVNR…EDGYDSDDFM (86 aa)) the chain is on the cytoplasmic side. Over residues 140 to 183 (YPDLAAEKESRDREERNEKKAQIQEQKKKEKEEVKKKKEMEDLK) the composition is skewed to basic and acidic residues. The interval 140 to 207 (YPDLAAEKES…EDGYDSDDFM (68 aa)) is disordered. Residues 184–198 (NYTSLMKSDNMTTNE) show a composition bias toward polar residues. Position 203 is a phosphoserine (Ser-203).

Belongs to the CCDC25 family. In terms of assembly, interacts (via cytoplasmic region) with ILK.

The protein resides in the cell membrane. It localises to the endomembrane system. Functionally, transmembrane receptor that senses neutrophil extracellular traps (NETs) and triggers the ILK-PARVB pathway to enhance cell motility. NETs are mainly composed of DNA fibers and are released by neutrophils to bind pathogens during inflammation. Specifically binds NETs on its extracellular region, in particular the 8-OHdG-enriched DNA present in NETs, and recruits ILK, initiating the ILK-PARVB cascade to induce cytoskeleton rearrangement and directional migration of cells. This chain is Coiled-coil domain-containing protein 25, found in Danio rerio (Zebrafish).